The chain runs to 71 residues: Protein SlyX homolog (71 aa).

This sequence belongs to the SlyX family.

This chain is Protein SlyX homolog, found in Rhodopseudomonas palustris (strain HaA2).